The sequence spans 302 residues: Tyrosine recombinase XerC (302 aa).

Residues 2 to 89 (QPLMEQIRAF…AIRSFYRHLL (88 aa)) enclose the Core-binding (CB) domain. One can recognise a Tyr recombinase domain in the interval 110–289 (RLPFHLDIDQ…SLDRLMEVYD (180 aa)). Residues arginine 150, lysine 174, histidine 241, arginine 244, and histidine 267 contribute to the active site. Residue tyrosine 276 is the O-(3'-phospho-DNA)-tyrosine intermediate of the active site.

Belongs to the 'phage' integrase family. XerC subfamily. Forms a cyclic heterotetrameric complex composed of two molecules of XerC and two molecules of XerD.

The protein resides in the cytoplasm. Site-specific tyrosine recombinase, which acts by catalyzing the cutting and rejoining of the recombining DNA molecules. The XerC-XerD complex is essential to convert dimers of the bacterial chromosome into monomers to permit their segregation at cell division. It also contributes to the segregational stability of plasmids. The protein is Tyrosine recombinase XerC of Pelobacter propionicus (strain DSM 2379 / NBRC 103807 / OttBd1).